Consider the following 270-residue polypeptide: NADPH-dependent 7-cyano-7-deazaguanine reductase (270 aa).

79–81 (IES) is a binding site for substrate. Position 81–82 (81–82 (SK)) interacts with NADPH. Residue Cys177 is the Thioimide intermediate of the active site. The active-site Proton donor is Asp184. 216 to 217 (HE) is a binding site for substrate. Position 245 to 246 (245 to 246 (RG)) interacts with NADPH.

Belongs to the GTP cyclohydrolase I family. QueF type 2 subfamily. As to quaternary structure, homodimer.

It is found in the cytoplasm. The enzyme catalyses 7-aminomethyl-7-carbaguanine + 2 NADP(+) = 7-cyano-7-deazaguanine + 2 NADPH + 3 H(+). It functions in the pathway tRNA modification; tRNA-queuosine biosynthesis. Functionally, catalyzes the NADPH-dependent reduction of 7-cyano-7-deazaguanine (preQ0) to 7-aminomethyl-7-deazaguanine (preQ1). This is NADPH-dependent 7-cyano-7-deazaguanine reductase from Acinetobacter baumannii (strain ACICU).